The following is a 136-amino-acid chain: Protein K5 (136 aa).

It belongs to the poxviridae K5 protein family.

In Homo sapiens (Human), this protein is Protein K5.